Here is a 900-residue protein sequence, read N- to C-terminus: E3 ubiquitin-protein ligase BRE1-like 2 (900 aa).

The interval 1–31 (MENQESDEPMQKKPHLLDSVSPNSMARNSSP) is disordered. Residues 20–31 (VSPNSMARNSSP) show a composition bias toward polar residues. Coiled coils occupy residues 63–96 (TVLQLQNQKLVQQLDLQKKQLYDVESKIQELQLN), 217–300 (EDAT…KDAA), 437–660 (SRIE…AEME), and 706–737 (SEKQVMEKQLHQVNASVENFKARIAHNEEQMK). The RING-type zinc-finger motif lies at 848–887 (CGVCFDRPKEVVIVKCYHLFCQQCIQRSLEIRHRKCPGCG).

The protein belongs to the BRE1 family. May act as a tetramer consisting of two copies of HUB1 and two copies of HUB2. As to expression, ubiquitously expressed.

The protein localises to the nucleus. It carries out the reaction S-ubiquitinyl-[E2 ubiquitin-conjugating enzyme]-L-cysteine + [acceptor protein]-L-lysine = [E2 ubiquitin-conjugating enzyme]-L-cysteine + N(6)-ubiquitinyl-[acceptor protein]-L-lysine.. It participates in protein modification; protein ubiquitination. Functionally, E3 ubiquitin-protein ligase that monoubiquitinates H2B to form H2BK143ub1. H2BK143ub1 gives a specific tag for epigenetic transcriptional activation and is also prerequisite for H3K4me and maybe H3K79me. It thereby plays a central role in histone code and gene regulation. Forms a ubiquitin ligase complex in cooperation with the E2 enzyme UBC2/RAD6. This is E3 ubiquitin-protein ligase BRE1-like 2 (HUB2) from Arabidopsis thaliana (Mouse-ear cress).